The chain runs to 632 residues: Golgin subfamily A member 8M (632 aa).

A disordered region spans residues 1-77 (MAEETQHNKL…SSATLKDLES (77 aa)). The span at 38 to 50 (TNGSIPQTATSGG) shows a compositional bias: polar residues. Coiled-coil stretches lie at residues 86-154 (LDSR…HMKR) and 209-421 (KLEQ…SLMA). A compositionally biased stretch (basic and acidic residues) spans 352–362 (KQEERIQEQHK). Disordered regions lie at residues 352–384 (KQEERIQEQHKSLQQLAKPQSVFEEPNNENKST), 422–456 (LPGEGHGGEHLDSEGEEAPQPMPSVPEDPESREAM), and 505–524 (DAALGGGHHQAGAQGGDEGE). Positions 508–520 (LGGGHHQAGAQGG) are enriched in gly residues.

It belongs to the GOLGA8 family.

The chain is Golgin subfamily A member 8M from Homo sapiens (Human).